We begin with the raw amino-acid sequence, 330 residues long: Beta-ketoacyl-[acyl-carrier-protein] synthase III (330 aa).

Residues C118 and H257 contribute to the active site. An ACP-binding region spans residues 258–262 (QANLR). N287 is a catalytic residue.

This sequence belongs to the thiolase-like superfamily. FabH family. Homodimer.

The protein resides in the cytoplasm. The catalysed reaction is malonyl-[ACP] + acetyl-CoA + H(+) = 3-oxobutanoyl-[ACP] + CO2 + CoA. Its pathway is lipid metabolism; fatty acid biosynthesis. Functionally, catalyzes the condensation reaction of fatty acid synthesis by the addition to an acyl acceptor of two carbons from malonyl-ACP. Catalyzes the first condensation reaction which initiates fatty acid synthesis and may therefore play a role in governing the total rate of fatty acid production. Possesses both acetoacetyl-ACP synthase and acetyl transacylase activities. Its substrate specificity determines the biosynthesis of branched-chain and/or straight-chain of fatty acids. The chain is Beta-ketoacyl-[acyl-carrier-protein] synthase III from Nitratidesulfovibrio vulgaris (strain DSM 19637 / Miyazaki F) (Desulfovibrio vulgaris).